Reading from the N-terminus, the 409-residue chain is Phenoxybenzoate dioxygenase subunit alpha (409 aa).

Residues 45–149 (WQPVALSADV…VEERYGLVFA (105 aa)) form the Rieske domain. [2Fe-2S] cluster-binding residues include C85, H87, C104, and H107. Fe cation is bound by residues H210 and H215.

This sequence belongs to the bacterial ring-hydroxylating dioxygenase alpha subunit family. In terms of assembly, this dioxygenase system consists of two proteins: the alpha subunit (PobA) and a subunit (PobB) that acts as a ferredoxin and a ferredoxin reductase. [2Fe-2S] cluster is required as a cofactor. Requires Fe cation as cofactor.

It participates in aromatic compound metabolism; carboxydiphenyl ether degradation. Its function is as follows. Degrades exclusively diarylether compounds having carboxyl groups in the 3- or 4-position. Yields a hemiacetal that spontaneously hydrolyzes to phenol and protocatechuate. The chain is Phenoxybenzoate dioxygenase subunit alpha (pobA) from Ectopseudomonas oleovorans (Pseudomonas oleovorans).